The chain runs to 912 residues: Metabotropic glutamate receptor 4 (912 aa).

Positions 1-32 are cleaved as a signal peptide; the sequence is MPGKSGLGWWWARLPLCLLLSLYGPWMPSSLG. The Extracellular portion of the chain corresponds to 33-586; the sequence is KPKGHPHMNS…PIIKLEWDSP (554 aa). A disulfide bridge connects residues cysteine 67 and cysteine 109. Asparagine 98 carries N-linked (GlcNAc...) asparagine glycosylation. Residues serine 159, 180–182, and tyrosine 230 each bind L-glutamate; that span reads AST. Intrachain disulfides connect cysteine 249–cysteine 538, cysteine 372–cysteine 388, cysteine 428–cysteine 435, cysteine 520–cysteine 539, cysteine 524–cysteine 542, cysteine 545–cysteine 557, and cysteine 560–cysteine 573. Residue asparagine 301 is glycosylated (N-linked (GlcNAc...) asparagine). Residue aspartate 312 participates in L-glutamate binding. Position 405 (lysine 405) interacts with L-glutamate. N-linked (GlcNAc...) asparagine glycosylation is found at asparagine 454 and asparagine 484. N-linked (GlcNAc...) asparagine glycosylation is present at asparagine 569. Residues 587–607 traverse the membrane as a helical segment; sequence WAVLPLFLAVVGIAATLFVVI. At 608 to 624 the chain is on the cytoplasmic side; it reads TFVRYNDTPIVKASGRE. Residues 625 to 645 form a helical membrane-spanning segment; it reads LSYVLLAGIFLCYATTFLMIA. Residues 646-653 lie on the Extracellular side of the membrane; that stretch reads EPDLGTCS. The helical transmembrane segment at 654-671 threads the bilayer; sequence LRRIFLGLGMSISYAALL. Over 672–699 the chain is Cytoplasmic; that stretch reads TKTNRIYRIFEQGKRSVSAPRFISPASQ. The chain crosses the membrane as a helical span at residues 700 to 720; it reads LAITFSLISLQLLGICVWFVV. Over 721 to 751 the chain is Extracellular; the sequence is DPSHSVVDFQDQRTLDPRFARGVLKCDISDL. Residues 752–772 form a helical membrane-spanning segment; that stretch reads SLICLLGYSMLLMVTCTVYAI. At 773 to 786 the chain is on the cytoplasmic side; the sequence is KTRGVPETFNEAKP. Residues 787 to 807 traverse the membrane as a helical segment; the sequence is IGFTMYTTCIVWLAFIPIFFG. Over 808–826 the chain is Extracellular; that stretch reads TSQSADKLYIQTTTLTVSV. Residues 827–847 form a helical membrane-spanning segment; the sequence is SLSASVSLGMLYMPKVYIILF. Topologically, residues 848–912 are cytoplasmic; sequence HPEQNVPKRK…TYVTYTNHAI (65 aa).

This sequence belongs to the G-protein coupled receptor 3 family. In terms of assembly, interacts with PICK1.

Its subcellular location is the cell membrane. Its function is as follows. G-protein coupled receptor for glutamate. Ligand binding causes a conformation change that triggers signaling via guanine nucleotide-binding proteins (G proteins) and modulates the activity of down-stream effectors. Signaling inhibits adenylate cyclase activity. In Macaca fascicularis (Crab-eating macaque), this protein is Metabotropic glutamate receptor 4 (GRM4).